The following is a 539-amino-acid chain: Phenylacetyl-CoA ligase epaB (539 aa).

Residue 188 to 199 participates in AMP binding; sequence RLFSSGTTGLPK. An AMP-binding region spans residues 449–525; the sequence is EVEGVLRNHP…DAIPRNASGK (77 aa).

The protein belongs to the ATP-dependent AMP-binding enzyme family.

Its pathway is secondary metabolite biosynthesis. Its function is as follows. Phenylacetyl-CoA ligase; part of the gene cluster that mediates the biosynthesis of nigerpyrone and its derivatives carbonarone A and pestalamide A. The biosynthesis pathway begins with the polyketide assembly by epaA to form phenylacetyl triketide precursor from successive condensation of two malonyl-CoA, presumably with one phenylacetyl-CoA starter unit produced by the phenylacetyl-CoA ligase epaB. For the nigerpyrone biosynthesis, the reactive polyketide chain is released as an aldehyde through the R-domain. A nonenzymatic cyclization and dehydration may create nigerpyrone. For the biosynthesis of carbonarone A and pestalamide A, an extra methyl group is added through the C-methyltransferase domain. Several further steps involving the dehydrogenase orf1, the cytochrome P450 monooxygenase orf2 and the FAD-dependent monooxygenase orf3 are required to form a carbonarone A precursor which is converted to carbonarone A via cyclization. The O-acetyltransferase epaC could catalyze the transfer of 2-methylsuccinyl-CoA, a common intermediate in the ethylmalonyl-CoA pathway, to generate the final product pestalamide A. This is Phenylacetyl-CoA ligase epaB from Aspergillus niger (strain ATCC MYA-4892 / CBS 513.88 / FGSC A1513).